A 410-amino-acid chain; its full sequence is Peptidase T (410 aa).

His-78 lines the Zn(2+) pocket. The active site involves Asp-80. Asp-140 contributes to the Zn(2+) binding site. Catalysis depends on Glu-174, which acts as the Proton acceptor. The Zn(2+) site is built by Glu-175, Asp-197, and His-379.

It belongs to the peptidase M20B family. It depends on Zn(2+) as a cofactor.

It localises to the cytoplasm. The enzyme catalyses Release of the N-terminal residue from a tripeptide.. In terms of biological role, cleaves the N-terminal amino acid of tripeptides. The sequence is that of Peptidase T from Vibrio atlanticus (strain LGP32) (Vibrio splendidus (strain Mel32)).